Consider the following 179-residue polypeptide: Putative endogenous retrovirus group FC1 Env polyprotein (179 aa).

Residues 1 to 22 (MARPSPLCLLLLLTLLPPIVPS) form the signal peptide. Residues 23 to 179 (NSLLTEPPFR…SKLRIFRTYV (157 aa)) form a truncated surface protein region. Asparagine 69 is a glycosylation site (N-linked (GlcNAc...) asparagine).

The protein belongs to the gamma type-C retroviral envelope protein family. HERV class-I F(c)1 env subfamily.

It is found in the virion. In terms of biological role, retroviral envelope proteins mediate receptor recognition and membrane fusion during early infection. Endogenous envelope proteins may have kept, lost or modified their original function during evolution. In Gorilla gorilla gorilla (Western lowland gorilla), this protein is Putative endogenous retrovirus group FC1 Env polyprotein (ERVFC1).